Reading from the N-terminus, the 519-residue chain is Seed lectin (519 aa).

2 cysteine pairs are disulfide-bonded: cysteine 249–cysteine 258 and cysteine 274–cysteine 293. Ricin B-type lectin domains lie at 261–387 (ETRT…WRVG) and 390–518 (VQPI…WVLF). The 1-alpha repeat unit spans residues 271–311 (DALCVDVAGALTSDGSRLILYPCGQQVNQKWTFHSDGTVRS). A carbohydrate-binding positions include 276–279 (DVAG) and 296–298 (QVN). The 1-beta repeat unit spans residues 312 to 352 (LGKCLATNNSKFGNLVVIYDCSKLAAEDISWDVSVGGTIMN). Cysteine 315 and cysteine 332 are disulfide-bonded. One copy of the 1-gamma repeat lies at 356 to 388 (EDLALTSNKATRSTNLTMEVNTYSASQGWRVGN). Residue asparagine 370 is glycosylated (N-linked (GlcNAc...) asparagine). One copy of the 2-alpha repeat lies at 401–438 (DDMCLEATDGNTNMWLEECVPNQREQSWALYSDGTIRV). 2 disulfides stabilise this stretch: cysteine 404–cysteine 419 and cysteine 445–cysteine 464. The 2-beta repeat unit spans residues 442–482 (RELCVTASSSTYDNWKVITILNCDGSNNQRWVFLADGSIST). Residues aspartate 454, 491–494 (DVAR), 505–508 (HRPH), and asparagine 512 contribute to the a carbohydrate site. Residues 486–513 (QRLAMDVARSDVDLKKIILHRPHGDLNQ) form a 2-gamma repeat.

This sequence in the N-terminal section; belongs to the ribosome-inactivating protein family. Type 2 RIP subfamily. Heterotrimer consisting of Aalpha, Abeta and B chains with Abeta and B being disulfide-linked.

In terms of biological role, seed lectin similar to type 2 ribosome-inactivating proteins. The Aalpha and Abeta chains constitute the rRNA glycosidase domain and the B chain the carbohydrate-binding lectin domain. Is predicted to have no glycosidase activity and, hence, to be non-toxic, due to small changes in both the nucleotide binding and carbohydrate binding capabilities. Binds galactose and derivatives with a preference for the beta-anomeric forms. Binds prophyrins. Has hemagglutinating activity towards rabbit and human erythrocytes. In Trichosanthes anguina (Snake gourd), this protein is Seed lectin.